Here is a 657-residue protein sequence, read N- to C-terminus: Tyramine beta-hydroxylase (657 aa).

Residues 77 to 97 traverse the membrane as a helical segment; the sequence is VALLFLLVAYCGGVVHAGEIV. Residues 103–214 enclose the DOMON domain; sequence TNVTVKWHTD…GTTQFYIAAS (112 aa). Residues Asn104 and Asn143 are each glycosylated (N-linked (GlcNAc...) asparagine). Tyr278 is an active-site residue. Cystine bridges form between Cys280–Cys330 and Cys319–Cys342. Cu(2+) is bound by residues His312 and His313. Positions 380, 458, 460, and 533 each coordinate Cu(2+). Disulfide bonds link Cys437–Cys549, Cys441–Cys606, and Cys512–Cys534. His458 is an active-site residue. N-linked (GlcNAc...) asparagine glycosylation is present at Asn555.

The protein belongs to the copper type II ascorbate-dependent monooxygenase family. It depends on Cu(2+) as a cofactor. In terms of tissue distribution, present in synaptic regions of RIC interneurons. Present in gonadal sheath cells of hermaphrodites (at protein level).

It localises to the membrane. It carries out the reaction tyramine + L-ascorbate + O2 = (R)-octopamine + L-dehydroascorbate + H2O. Functionally, required for the conversion of tyramine to octopamine, a precursor of octapamine but probably itself a neurotransmitter. Involved in the regulation of egg laying, which is inhibited by tyramine. Due to its involvement in octopamine biosynthesis, also required for crtc-1-dependent regulation of AMPK-mediated longevity. This Caenorhabditis elegans protein is Tyramine beta-hydroxylase.